Here is a 408-residue protein sequence, read N- to C-terminus: Na(+)-translocating NADH-quinone reductase subunit F (408 aa).

Residues 4–24 (VYLGVGMFTAIVLVLVLVILF) form a helical membrane-spanning segment. The 2Fe-2S ferredoxin-type domain maps to 33–127 (GDIIIGINGD…DMEIELDEEI (95 aa)). [2Fe-2S] cluster contacts are provided by C70, C76, C79, and C111. The FAD-binding FR-type domain maps to 130–270 (IKKWECDVIS…SGPFGEFFAK (141 aa)).

This sequence belongs to the NqrF family. As to quaternary structure, composed of six subunits; NqrA, NqrB, NqrC, NqrD, NqrE and NqrF. The cofactor is [2Fe-2S] cluster. FAD serves as cofactor.

It is found in the cell inner membrane. The catalysed reaction is a ubiquinone + n Na(+)(in) + NADH + H(+) = a ubiquinol + n Na(+)(out) + NAD(+). Its function is as follows. NQR complex catalyzes the reduction of ubiquinone-1 to ubiquinol by two successive reactions, coupled with the transport of Na(+) ions from the cytoplasm to the periplasm. The first step is catalyzed by NqrF, which accepts electrons from NADH and reduces ubiquinone-1 to ubisemiquinone by a one-electron transfer pathway. This chain is Na(+)-translocating NADH-quinone reductase subunit F, found in Shewanella denitrificans (strain OS217 / ATCC BAA-1090 / DSM 15013).